We begin with the raw amino-acid sequence, 235 residues long: Small ribosomal subunit protein uS3 (235 aa).

Residues 39–107 (VRKFLLGQLS…PTKLNISEIR (69 aa)) enclose the KH type-2 domain.

It belongs to the universal ribosomal protein uS3 family. In terms of assembly, part of the 30S ribosomal subunit. Forms a tight complex with proteins S10 and S14.

Its function is as follows. Binds the lower part of the 30S subunit head. Binds mRNA in the 70S ribosome, positioning it for translation. The sequence is that of Small ribosomal subunit protein uS3 from Blochmanniella floridana.